The sequence spans 492 residues: Transmembrane protein 39B (492 aa).

The disordered stretch occupies residues 1 to 53; it reads MGGRRGPNRTSYYRNPLCEPGSSGASGGGHSSSASVSSVRSRSRTTSGTGLSS. Asparagine 8 carries an N-linked (GlcNAc...) asparagine glycan. Over residues 31–53 the composition is skewed to low complexity; it reads SSSASVSSVRSRSRTTSGTGLSS. 8 helical membrane passes run 77–97, 115–135, 153–175, 185–205, 288–308, 322–342, 421–441, and 447–467; these read SILFELQLFFCQLIALFVHYI, TSLNFHLIDFNLLMVTTIVLG, SLFRSILLFLTRFTVLTATGWSL, TYSFLNLLFLCYPFGMYIPFL, EVLVSSMLSAYYVAFVPVWFV, LFLLVSISTSVILMQHLLPAS, ILNILLLLEGAVIVYQLYSLM, and HQTISLALILFSNYYAFFKLL.

It belongs to the TMEM39 family.

Its subcellular location is the endoplasmic reticulum membrane. Its function is as follows. May protect the cells against DNA damage caused by exposure to the cold-warming stress and facilitates tissue damage repair during the recovery phase. In Rattus norvegicus (Rat), this protein is Transmembrane protein 39B.